An 864-amino-acid polypeptide reads, in one-letter code: Protein 4.1 (864 aa).

Composition is skewed to polar residues over residues 1–16 and 27–41; these read MTTEKSLVTEAENSQH and NSGQQEPQQEESCQT. Disordered stretches follow at residues 1-122, 136-170, and 182-202; these read MTTE…GTSL, EPELKTDPSLDLHSLSSAETQPAQEELREDPDFEI, and IEVKEESPQSKAETELKASQK. Ser-14 carries the post-translational modification Phosphoserine. Thr-60 bears the Phosphothreonine; by CDK1 mark. Positions 61–75 are enriched in basic and acidic residues; it reads PTHEDLTKNKERTSE. A compositionally biased stretch (low complexity) spans 76–87; the sequence is SRGLSRLFSSFL. Phosphoserine is present on residues Ser-84, Ser-85, Ser-95, Ser-104, Ser-121, Ser-149, Ser-151, Ser-152, Ser-188, and Ser-191. The span at 101 to 117 shows a compositional bias: basic and acidic residues; it reads EVESDKEKGEGGQKEIE. Residues 149-158 show a composition bias toward polar residues; the sequence is SLSSAETQPA. Residues 182–199 are compositionally biased toward basic and acidic residues; it reads IEVKEESPQSKAETELKA. In terms of domain architecture, FERM spans 210–491; sequence MHCKVSLLDD…EHHTFFRLTS (282 aa). Tyr-222 is modified (phosphotyrosine). Position 378 is a phosphothreonine (Thr-378). A hydrophilic region spans residues 494–614; sequence TIPKSKFLAL…QAEPEPTEAW (121 aa). 2 disordered regions span residues 518–572 and 586–611; these read RQAS…VAEG and KAQKETVKAEVKKEDEPPEQAEPEPT. Ser-521, Ser-540, Ser-542, and Ser-555 each carry phosphoserine. A compositionally biased stretch (basic and acidic residues) spans 587 to 600; that stretch reads AQKETVKAEVKKED. Positions 601–610 are enriched in acidic residues; the sequence is EPPEQAEPEP. Residues 615 to 713 are spectrin--actin-binding; the sequence is KVEKTHIEVT…WDKRLSTHSP (99 aa). The residue at position 660 (Tyr-660) is a Phosphotyrosine; by EGFR. Phosphoserine is present on residues Ser-664, Ser-674, Ser-684, and Ser-709. At Ser-712 the chain carries Phosphoserine; by CDK1. The tract at residues 714–864 is C-terminal (CTD); sequence FRTLNINGQI…VHQETEIADE (151 aa). A phosphothreonine mark is found at Thr-736 and Thr-859.

Binds with a high affinity to glycophorin and with lower affinity to band III protein. Associates with the nuclear mitotic apparatus. Interacts with calmodulin. Interacts with CPAP. Interacts with DLG1. Also found to associate with contractile apparatus and tight junctions. Interacts with NUMA1; this interaction is negatively regulated by CDK1 during metaphase and promotes anaphase-specific localization of NUMA1 in symmetrically dividing cells. Interacts with ATP2B1; regulates small intestinal calcium absorption through regulation of membrane expression of ATP2B1. Phosphorylated at multiple sites by different protein kinases and each phosphorylation event selectively modulates the protein's functions. Post-translationally, phosphorylation on Tyr-660 reduces the ability of 4.1 to promote the assembly of the spectrin/actin/4.1 ternary complex. In terms of processing, O-glycosylated; contains N-acetylglucosamine side chains in the C-terminal domain.

The protein resides in the cytoplasm. It is found in the cytoskeleton. It localises to the cell cortex. The protein localises to the nucleus. Protein 4.1 is a major structural element of the erythrocyte membrane skeleton. It plays a key role in regulating membrane physical properties of mechanical stability and deformability by stabilizing spectrin-actin interaction. Recruits DLG1 to membranes. Required for dynein-dynactin complex and NUMA1 recruitment at the mitotic cell cortex during anaphase. This Homo sapiens (Human) protein is Protein 4.1.